We begin with the raw amino-acid sequence, 402 residues long: CinA-like protein (402 aa).

This sequence belongs to the CinA family.

In Deinococcus deserti (strain DSM 17065 / CIP 109153 / LMG 22923 / VCD115), this protein is CinA-like protein.